The sequence spans 290 residues: Poly-beta-1,6-N-acetyl-D-glucosamine N-deacetylase (290 aa).

Positions 1 to 28 (MKYRKLIILVLSILIILPVSTLDGHHIA) are cleaved as a signal peptide. One can recognise a NodB homology domain in the interval 114 to 290 (RSVWINFDDM…KRWDGFHEKD (177 aa)).

It belongs to the polysaccharide deacetylase family.

The protein localises to the secreted. The protein resides in the cell wall. Functionally, catalyzes the N-deacetylation of poly-beta-1,6-N-acetyl-D-glucosamine (PNAG, also referred to as PIA), a biofilm adhesin polysaccharide. N-deacetylation is crucial for attachment of the polysaccharide to the bacterial cell surface; it leads to the introduction of positive charges in the otherwise neutral PIA polymer, allowing electrostatic interactions. The chain is Poly-beta-1,6-N-acetyl-D-glucosamine N-deacetylase (icaB) from Staphylococcus aureus (strain Mu50 / ATCC 700699).